A 213-amino-acid chain; its full sequence is Large ribosomal subunit protein uL1 (213 aa).

Belongs to the universal ribosomal protein uL1 family. As to quaternary structure, part of the 50S ribosomal subunit.

Functionally, binds directly to 23S rRNA. Probably involved in E site tRNA release. Protein L1 is also a translational repressor protein, it controls the translation of its operon by binding to its mRNA. The polypeptide is Large ribosomal subunit protein uL1 (Methanosarcina mazei (strain ATCC BAA-159 / DSM 3647 / Goe1 / Go1 / JCM 11833 / OCM 88) (Methanosarcina frisia)).